Reading from the N-terminus, the 314-residue chain is Small ribosomal subunit protein RACK1 (314 aa).

Thr-10 carries the post-translational modification Phosphothreonine. One copy of the WD 1 repeat lies at 13–44; sequence GHSGWVTSLSTAPENPDILLSGSRDKSIILWN. Ser-39 is subject to Phosphoserine. Tyr-52 is modified (phosphotyrosine). WD repeat units follow at residues 61 to 91, 103 to 133, 146 to 178, 190 to 220, 231 to 260, and 281 to 311; these read GHSH…RLWD, GHTS…KIWN, GHSD…KVWD, GHTG…MLWD, EAKA…RIFD, and SSEP…RVWQ. Ser-148 is subject to Phosphoserine. Phosphoserine occurs at positions 242 and 255.

It belongs to the WD repeat G protein beta family. Ribosomal protein RACK1 subfamily. As to quaternary structure, component of the small ribosomal subunit (SSU). Mature yeast ribosomes consist of a small (40S) and a large (60S) subunit. The 40S small subunit contains 1 molecule of ribosomal RNA (18S rRNA) and at least 33 different proteins. The large 60S subunit contains 3 rRNA molecules (25S, 5.8S and 5S rRNA) and at least 46 different proteins. RACK1 is located at the head of the SSU in the vicinity of the mRNA exit channel. RACK1 interacts with the mRNA-binding protein SCP16. RACK1 also exists simultaneously as a homodimer in a cytosolic non-ribosome-bound form. Interacts with pck2. Interacts with pat1/ran1.

It is found in the cytoplasm. The protein localises to the membrane. Its function is as follows. Component of the ribosome, a large ribonucleoprotein complex responsible for the synthesis of proteins in the cell. The small ribosomal subunit (SSU) binds messenger RNAs (mRNAs) and translates the encoded message by selecting cognate aminoacyl-transfer RNA (tRNA) molecules. The large subunit (LSU) contains the ribosomal catalytic site termed the peptidyl transferase center (PTC), which catalyzes the formation of peptide bonds, thereby polymerizing the amino acids delivered by tRNAs into a polypeptide chain. The nascent polypeptides leave the ribosome through a tunnel in the LSU and interact with protein factors that function in enzymatic processing, targeting, and the membrane insertion of nascent chains at the exit of the ribosomal tunnel. Located at the head of the 40S ribosomal subunit in the vicinity of the mRNA exit channel, RACK1 serves as a scaffold protein that can recruit other proteins to the ribosome. Involved in induction of the ribosome quality control (RQC) pathway; a pathway that degrades nascent peptide chains during problematic translation. Involved in the negative regulation of translation of a specific subset of proteins. May be a receptor for protein kinase C in the regulation of actin cytoskeleton organization during cell wall synthesis and morphogenesis. Involved in the control of G2/M transition. May function as an anchoring protein for pat1/ran1 kinase. Negatively regulates the cell integrity transduction pathway by favoring translation of the tyrosine-phosphatases pyp1 and pyp2 that deactivate pmk1. Positively regulates the synthesis of the stress-responsive transcription factor Atf1 and the cytoplasmic catalase, a detoxificant enzyme induced by treatment with hydrogen peroxide. The protein is Small ribosomal subunit protein RACK1 of Schizosaccharomyces pombe (strain 972 / ATCC 24843) (Fission yeast).